A 190-amino-acid chain; its full sequence is E3 ubiquitin-protein ligase RNF4 (190 aa).

Residues 1–16 (MSTRKRRGGAINSRQA) are required for ubiquitination activity. The interval 1–29 (MSTRKRRGGAINSRQAQKRTREATSTPEI) is disordered. The segment at 4 to 61 (RKRRGGAINSRQAQKRTREATSTPEISLEAEPIELVETAGDEIVDLTCESLEPVVVDL) is mediates interaction with TRPS1. 4 short sequence motifs (SUMO interaction motif) span residues 36 to 39 (IELV), 46 to 49 (IVDL), 57 to 59 (VVV), and 67 to 70 (VVIV). Phosphoserine occurs at positions 94 and 95. Positions 132, 135, 154, 156, 159, 162, 173, and 176 each coordinate Zn(2+). An RING-type zinc finger spans residues 132–177 (CPICMDGYSEIVQNGRLIVSTECGHVFCSQCLRDSLKNANTCPTCR).

As to quaternary structure, homodimer (via RING-type zinc finger domain). Interacts with GSC2. Interacts with AR/the androgen receptor and TBP. Interacts with TCF20. Interacts with PATZ1. Interacts with TRPS1; negatively regulates TRPS1 transcriptional repressor activity. Interacts with PML (isoform PML-1, isoform PML-2, isoform PML-3, isoform PML-4, isoform PML-5 and isoform PML-6). Interacts with PRDM1/Blimp-1. Sumoylated; conjugated by one or two SUMO1 moieties. In terms of processing, autoubiquitinated. Widely expressed at low levels in many tissues; highly expressed in testis.

It localises to the cytoplasm. The protein resides in the nucleus. Its subcellular location is the PML body. The catalysed reaction is S-ubiquitinyl-[E2 ubiquitin-conjugating enzyme]-L-cysteine + [acceptor protein]-L-lysine = [E2 ubiquitin-conjugating enzyme]-L-cysteine + N(6)-ubiquitinyl-[acceptor protein]-L-lysine.. The protein operates within protein modification; protein ubiquitination. E3 ubiquitin-protein ligase which binds polysumoylated chains covalently attached to proteins and mediates 'Lys-6'-, 'Lys-11'-, 'Lys-48'- and 'Lys-63'-linked polyubiquitination of those substrates and their subsequent targeting to the proteasome for degradation. Regulates the degradation of several proteins including PML and the transcriptional activator PEA3. Involved in chromosome alignment and spindle assembly, it regulates the kinetochore CENPH-CENPI-CENPK complex by targeting polysumoylated CENPI to proteasomal degradation. Regulates the cellular responses to hypoxia and heat shock through degradation of respectively EPAS1 and PARP1. Alternatively, it may also bind DNA/nucleosomes and have a more direct role in the regulation of transcription for instance enhancing basal transcription and steroid receptor-mediated transcriptional activation. Catalyzes ubiquitination of sumoylated PARP1 in response to PARP1 trapping to chromatin, leading to PARP1 removal from chromatin by VCP/p97. In Homo sapiens (Human), this protein is E3 ubiquitin-protein ligase RNF4.